Reading from the N-terminus, the 279-residue chain is ATP synthase gamma chain (279 aa).

The protein belongs to the ATPase gamma chain family. F-type ATPases have 2 components, CF(1) - the catalytic core - and CF(0) - the membrane proton channel. CF(1) has five subunits: alpha(3), beta(3), gamma(1), delta(1), epsilon(1). CF(0) has three main subunits: a, b and c.

It is found in the cell membrane. In terms of biological role, produces ATP from ADP in the presence of a proton gradient across the membrane. The gamma chain is believed to be important in regulating ATPase activity and the flow of protons through the CF(0) complex. This is ATP synthase gamma chain from Mycoplasma pneumoniae (strain ATCC 29342 / M129 / Subtype 1) (Mycoplasmoides pneumoniae).